Reading from the N-terminus, the 289-residue chain is ATP phosphoribosyltransferase (289 aa).

It belongs to the ATP phosphoribosyltransferase family. Long subfamily. It depends on Mg(2+) as a cofactor.

It localises to the cytoplasm. The enzyme catalyses 1-(5-phospho-beta-D-ribosyl)-ATP + diphosphate = 5-phospho-alpha-D-ribose 1-diphosphate + ATP. The protein operates within amino-acid biosynthesis; L-histidine biosynthesis; L-histidine from 5-phospho-alpha-D-ribose 1-diphosphate: step 1/9. Its activity is regulated as follows. Feedback inhibited by histidine. Its function is as follows. Catalyzes the condensation of ATP and 5-phosphoribose 1-diphosphate to form N'-(5'-phosphoribosyl)-ATP (PR-ATP). Has a crucial role in the pathway because the rate of histidine biosynthesis seems to be controlled primarily by regulation of HisG enzymatic activity. The sequence is that of ATP phosphoribosyltransferase from Methanosarcina mazei (strain ATCC BAA-159 / DSM 3647 / Goe1 / Go1 / JCM 11833 / OCM 88) (Methanosarcina frisia).